The chain runs to 284 residues: Heat stress transcription factor B-1 (284 aa).

Residues 12–106 (PAPFLSKTYQ…LLTDIRRRKS (95 aa)) mediate DNA binding. The tract at residues 118–151 (VGSPSESNSGGGDDHGSSSTSSPGSSKNPGSVEN) is disordered. Low complexity predominate over residues 134–148 (SSSTSSPGSSKNPGS). The interval 147–192 (GSVENMVADLSGENEKLKRENNNLSSELAAAKKQRDELVTFLTGHL) is hydrophobic repeat HR-A/B. Residues 247 to 252 (RKKRDR) carry the Nuclear localization signal motif.

This sequence belongs to the HSF family. Class B subfamily. Homotrimer. Post-translationally, exhibits temperature-dependent phosphorylation.

The protein resides in the nucleus. Its function is as follows. Transcriptional regulator that specifically binds DNA sequence 5'-AGAAnnTTCT-3' known as heat shock promoter elements (HSE). This chain is Heat stress transcription factor B-1 (HSFB1), found in Arabidopsis thaliana (Mouse-ear cress).